The sequence spans 510 residues: Glycerol kinase (510 aa).

Residue T12 coordinates ADP. Residues T12, T13, and S14 each contribute to the ATP site. T12 lines the sn-glycerol 3-phosphate pocket. Residue R16 participates in ADP binding. Positions 82, 83, and 134 each coordinate sn-glycerol 3-phosphate. Glycerol-binding residues include R82, E83, and Y134. A Phosphohistidine; by HPr modification is found at H230. D244 serves as a coordination point for sn-glycerol 3-phosphate. Glycerol contacts are provided by D244 and Q245. 2 residues coordinate ADP: T266 and G309. Positions 266, 309, 313, and 410 each coordinate ATP. Positions 410 and 414 each coordinate ADP.

The protein belongs to the FGGY kinase family. Homotetramer and homodimer (in equilibrium). Post-translationally, the phosphoenolpyruvate-dependent sugar phosphotransferase system (PTS), including enzyme I, and histidine-containing protein (HPr) are required for the phosphorylation, which leads to the activation of the enzyme.

The catalysed reaction is glycerol + ATP = sn-glycerol 3-phosphate + ADP + H(+). The protein operates within polyol metabolism; glycerol degradation via glycerol kinase pathway; sn-glycerol 3-phosphate from glycerol: step 1/1. Its activity is regulated as follows. Activated by phosphorylation and inhibited by fructose 1,6-bisphosphate (FBP). Its function is as follows. Key enzyme in the regulation of glycerol uptake and metabolism. Catalyzes the phosphorylation of glycerol to yield sn-glycerol 3-phosphate. In Bacillus cereus (strain ATCC 10987 / NRS 248), this protein is Glycerol kinase.